The sequence spans 1102 residues: Phosphatidylinositol 4,5-bisphosphate 3-kinase catalytic subunit gamma isoform (1102 aa).

Residues 34-141 (SMELIPIEFV…PGQIHLVQRH (108 aa)) enclose the PI3K-ABD domain. Residues 217–309 (NNCIFIVIHR…GEEIHVVLDT (93 aa)) form the PI3K-RBD domain. The 165-residue stretch at 357-521 (CDRKFRVKIR…NSMSISILLD (165 aa)) folds into the C2 PI3K-type domain. One can recognise a PIK helical domain in the interval 541–723 (DRVRAEMPNQ…AVILEAYLRG (183 aa)). The PI3K/PI4K catalytic domain occupies 797 to 1080 (AIEKCKVMAS…QIEVCRDKGW (284 aa)). A G-loop region spans residues 803–809 (VMASKKK). ATP-binding positions include 829–838 (GIIFKHGDDL) and 864–872 (LLPYGCIST). Residues 943–951 (GIGDRHNDN) form a catalytic loop region. 961 to 969 (FHIDFGHIL) is an ATP binding site. The activation loop stretch occupies residues 962–988 (HIDFGHILGNYKSFLGINKERVPFVLT). T1024 bears the Phosphothreonine; by PKA mark. S1101 carries the post-translational modification Phosphoserine; by autocatalysis.

The protein belongs to the PI3/PI4-kinase family. In terms of assembly, heterodimer of a catalytic subunit PIK3CG and a PIK3R5 or PIK3R6 regulatory subunit. Interacts with GRK2 through the PIK helical domain. Interaction with GRK2 is required for targeting to agonist-occupied receptor. Interacts with PDE3B; regulates PDE3B activity and thereby cAMP levels in cells. Interacts with TPM2. Interacts with EPHA8; regulates integrin-mediated cell adhesion to substrate. Interacts with HRAS; the interaction is required for membrane recruitment and beta-gamma G protein dimer-dependent activation of the PI3K gamma complex PIK3CG:PIK3R6. Post-translationally, autophosphorylation at Ser-1101 has no effect on the phosphatidylinositol-4,5-bisphosphate 3-kinase activity. In terms of tissue distribution, pancreas, skeletal muscle, liver and heart.

The protein localises to the cytoplasm. It is found in the cell membrane. It carries out the reaction a 1,2-diacyl-sn-glycero-3-phospho-(1D-myo-inositol) + ATP = a 1,2-diacyl-sn-glycero-3-phospho-(1D-myo-inositol-3-phosphate) + ADP + H(+). The catalysed reaction is a 1,2-diacyl-sn-glycero-3-phospho-(1D-myo-inositol-4,5-bisphosphate) + ATP = a 1,2-diacyl-sn-glycero-3-phospho-(1D-myo-inositol-3,4,5-trisphosphate) + ADP + H(+). It catalyses the reaction a 1,2-diacyl-sn-glycero-3-phospho-(1D-myo-inositol 4-phosphate) + ATP = a 1,2-diacyl-sn-glycero-3-phospho-(1D-myo-inositol-3,4-bisphosphate) + ADP + H(+). The enzyme catalyses L-seryl-[protein] + ATP = O-phospho-L-seryl-[protein] + ADP + H(+). It functions in the pathway phospholipid metabolism; phosphatidylinositol phosphate biosynthesis. Its activity is regulated as follows. Activated by both the alpha and the beta-gamma G proteins following stimulation of G protein-coupled receptors (GPCRs). Activation by GPCRs is assisted by the regulatory subunits (PIK3R5 or PIK3R6) leading to the translocation from the cytosol to the plasma membrane and to kinase activation. Inhibited by AS-604850 and AS-605240. Its function is as follows. Phosphoinositide-3-kinase (PI3K) that phosphorylates PtdIns(4,5)P2 (Phosphatidylinositol 4,5-bisphosphate) to generate phosphatidylinositol 3,4,5-trisphosphate (PIP3). PIP3 plays a key role by recruiting PH domain-containing proteins to the membrane, including AKT1 and PDPK1, activating signaling cascades involved in cell growth, survival, proliferation, motility and morphology. Links G-protein coupled receptor activation to PIP3 production. Involved in immune, inflammatory and allergic responses. Modulates leukocyte chemotaxis to inflammatory sites and in response to chemoattractant agents. May control leukocyte polarization and migration by regulating the spatial accumulation of PIP3 and by regulating the organization of F-actin formation and integrin-based adhesion at the leading edge. Controls motility of dendritic cells. Together with PIK3CD is involved in natural killer (NK) cell development and migration towards the sites of inflammation. Participates in T-lymphocyte migration. Regulates T-lymphocyte proliferation, activation, and cytokine production. Together with PIK3CD participates in T-lymphocyte development. Required for B-lymphocyte development and signaling. Together with PIK3CD participates in neutrophil respiratory burst. Together with PIK3CD is involved in neutrophil chemotaxis and extravasation. Together with PIK3CB promotes platelet aggregation and thrombosis. Regulates alpha-IIb/beta-3 integrins (ITGA2B/ ITGB3) adhesive function in platelets downstream of P2Y12 through a lipid kinase activity-independent mechanism. May have also a lipid kinase activity-dependent function in platelet aggregation. Involved in endothelial progenitor cell migration. Negative regulator of cardiac contractility. Modulates cardiac contractility by anchoring protein kinase A (PKA) and PDE3B activation, reducing cAMP levels. Regulates cardiac contractility also by promoting beta-adrenergic receptor internalization by binding to GRK2 and by non-muscle tropomyosin phosphorylation. Also has serine/threonine protein kinase activity: both lipid and protein kinase activities are required for beta-adrenergic receptor endocytosis. May also have a scaffolding role in modulating cardiac contractility. Contributes to cardiac hypertrophy under pathological stress. Through simultaneous binding of PDE3B to RAPGEF3 and PIK3R6 is assembled in a signaling complex in which the PI3K gamma complex is activated by RAPGEF3 and which is involved in angiogenesis. In neutrophils, participates in a phospholipase C-activating N-formyl peptide-activated GPCR (G protein-coupled receptor) signaling pathway downstream of RASGRP4-mediated Ras-activation, to promote neutrophil functional responses. The chain is Phosphatidylinositol 4,5-bisphosphate 3-kinase catalytic subunit gamma isoform (PIK3CG) from Homo sapiens (Human).